The sequence spans 213 residues: Nicolin-1 (213 aa).

As to quaternary structure, part of the neuronal tubulin polyglutamylase complex which contains TPGS1, TPGS2, TTLL1, LRRC49 and NICN1. As to expression, high expression level is found in brain, testis, liver and kidney. Weak expression in spleen, leukocytes, small intestin and colon.

It is found in the nucleus. In Mus musculus (Mouse), this protein is Nicolin-1 (Nicn1).